Consider the following 473-residue polypeptide: Dynein axonemal assembly factor 11 (473 aa).

4 LRR repeats span residues 22 to 43 (SLEELSLHQQEIERLEHIDKWC), 45 to 66 (DLKILYLQNNLIGKIENVSKLK), 67 to 88 (KLEYLNLALNNIERIENLEGCE), and 89 to 110 (WLTKLDLTVNFIGELSSVKTLT). The LRRCT domain maps to 123-161 (NPCADFDGYRQFVVVTLQQLKWLDGKEIERSERIQALQN). A coiled-coil region spans residues 153 to 205 (SERIQALQNYTSVEQQIREQEKAYCLRRAKEKEEAQRKLEEENESEDKKKSST). Composition is skewed to basic and acidic residues over residues 188 to 202 (QRKLEEENESEDKKK) and 273 to 283 (EKQRKAQDKLS). Disordered stretches follow at residues 188-244 (QRKL…TKES), 273-292 (EKQRKAQDKLSEKKKKAKPP), and 387-473 (VGEM…PPLI). A CS domain is found at 305-402 (VNEAKLDFSL…GGQRTPTSVK (98 aa)). The span at 397-408 (TPTSVKTTSTSS) shows a compositional bias: low complexity. Residues 417-431 (KQIERLEVDPSKHSC) show a composition bias toward basic and acidic residues. A compositionally biased stretch (acidic residues) spans 456–467 (PSEEDPDFEDNP).

This sequence belongs to the tilB family. In terms of assembly, interacts (via CS domain) with ZMYND10 (via C-terminus). As to expression, mainly expressed in cells with motile cilia. Expressed in epithelial cells of the trachea, testis and ependymal cells of the cerebral ventricles. In testis, abundant expression in late prophase of meiosis I with a dramatic decrease after the first meiotic division (at protein level).

It is found in the cytoplasm. It localises to the cell projection. The protein localises to the cilium. The protein resides in the dynein axonemal particle. Its subcellular location is the flagellum. Its function is as follows. Involved in dynein arm assembly, is important for expression and transporting outer dynein arm (ODA) proteins from the cytoplasm to the cilia. Acts as a crucial component in the formation and motility of spermatozoal flagella. The sequence is that of Dynein axonemal assembly factor 11 (Dnaaf11) from Mus musculus (Mouse).